We begin with the raw amino-acid sequence, 120 residues long: Basic phospholipase A2 Cc2-PLA2 (120 aa).

7 disulfides stabilise this stretch: C26–C113, C28–C44, C43–C95, C49–C120, C50–C88, C57–C81, and C75–C86. Ca(2+) is bound by residues Y27, G29, and G31. H47 is an active-site residue. Residue D48 participates in Ca(2+) binding. The active site involves D89.

Belongs to the phospholipase A2 family. Group II subfamily. D49 sub-subfamily. As to quaternary structure, monomer. It depends on Ca(2+) as a cofactor. Expressed by the venom gland.

It localises to the secreted. The catalysed reaction is a 1,2-diacyl-sn-glycero-3-phosphocholine + H2O = a 1-acyl-sn-glycero-3-phosphocholine + a fatty acid + H(+). Its function is as follows. Basic phospholipase A2 that inhibits ADP-, thrombin- and arachidonic acid-induced platelet aggregation. It also exhibits anticoagulant effects upon human plasma in vitro. It induces a high hemolytic activity reaching its maximum after 24 hours. It induces a marked elevation of plasmatic levels of interleukin-6 and -10, eosinophil peroxidase and complement lytic activities and it also provokes a drastic increase of lymphocytes, monocytes and neutrophils in peripheral blood accompanied by a rapid intense migration of neutrophils to the peritoneal cavity. PLA2 catalyzes the calcium-dependent hydrolysis of the 2-acyl groups in 3-sn-phosphoglycerides. In Cerastes cerastes (Horned desert viper), this protein is Basic phospholipase A2 Cc2-PLA2.